The primary structure comprises 210 residues: Vacuolar protein sorting-associated protein 2 homolog 3 (210 aa).

The disordered stretch occupies residues 1 to 23 (MNIFTKKPNPREVLRESKREMTQ). Residues 9-23 (NPREVLRESKREMTQ) are compositionally biased toward basic and acidic residues. The stretch at 28–84 (IEKEIGSLQSEEKKLVLEIKRTAKSGNEGATKILARQLIRLRQQIANLQGSRAQMRG) forms a coiled coil. The tract at residues 178 to 200 (LSSAPKGKIGGKKAEDVGSSGID) is disordered.

It belongs to the SNF7 family. As to quaternary structure, component of the endosomal sorting required for transport complex III (ESCRT-III), composed at least of VPS2, VPS20, VPS24 and VPS32.

The protein resides in the endosome. In terms of biological role, component of the ESCRT-III complex, which is required for multivesicular bodies (MVBs) formation and sorting of endosomal cargo proteins into MVBs. The ESCRT-III complex is probably involved in the concentration of MVB cargo. The protein is Vacuolar protein sorting-associated protein 2 homolog 3 (VPS2.3) of Arabidopsis thaliana (Mouse-ear cress).